The sequence spans 360 residues: Amine dehydrogenase (360 aa).

Belongs to the amine dehydrogenase family. Homodimer.

The catalysed reaction is a secondary alkyl amine + NAD(+) + H2O = a ketone + NH4(+) + NADH + H(+). It carries out the reaction a secondary alkyl amine + NADP(+) + H2O = a ketone + NH4(+) + NADPH + H(+). It catalyses the reaction serinol + NAD(+) + H2O = dihydroxyacetone + NH4(+) + NADH + H(+). The enzyme catalyses serinol + NADP(+) + H2O = dihydroxyacetone + NH4(+) + NADPH + H(+). The catalysed reaction is 2-aminopropan-1-ol + NAD(+) + H2O = hydroxyacetone + NH4(+) + NADH + H(+). It carries out the reaction (R)-1-phenylethylamine + NAD(+) + H2O = acetophenone + NH4(+) + NADH + H(+). It catalyses the reaction (S)-1-phenylethylamine + NAD(+) + H2O = acetophenone + NH4(+) + NADH + H(+). The enzyme catalyses (2S)-2-aminobutan-1-ol + NAD(+) + H2O = 1-hydroxy-2-butanone + NH4(+) + NADH + H(+). The catalysed reaction is (2S)-2-amino-3-methylbutan-1-ol + NAD(+) + H2O = 1-hydroxy-3-methylbutan-2-one + NH4(+) + NADH + H(+). It carries out the reaction 2-aminopentan-1-ol + NAD(+) + H2O = 1-hydroxypentan-2-one + NH4(+) + NADH + H(+). It catalyses the reaction (S)-leucinol + NAD(+) + H2O = 1-hydroxy-4-methylpentan-2-one + NH4(+) + NADH + H(+). The enzyme catalyses (S)-isoleucinol + NAD(+) + H2O = (3S)-1-hydroxy-3-methylpentan-2-one + NH4(+) + NADH + H(+). The catalysed reaction is (S)-methioninol + NAD(+) + H2O = 1-hydroxy-4-(methythio)butan-2-one + NH4(+) + NADH + H(+). It carries out the reaction 2-aminocyclohexanol + NAD(+) + H2O = 2-hydroxycyclohexan-1-one + NH4(+) + NADH + H(+). It catalyses the reaction L-alanine + NAD(+) + H2O = pyruvate + NH4(+) + NADH + H(+). The enzyme catalyses D-alanine + NAD(+) + H2O = pyruvate + NH4(+) + NADH + H(+). The catalysed reaction is L-aspartate + NAD(+) + H2O = oxaloacetate + NH4(+) + NADH + H(+). It carries out the reaction D-aspartate + NAD(+) + H2O = oxaloacetate + NH4(+) + NADH + H(+). It catalyses the reaction L-glutamate + NAD(+) + H2O = 2-oxoglutarate + NH4(+) + NADH + H(+). The enzyme catalyses D-glutamate + NAD(+) + H2O = 2-oxoglutarate + NH4(+) + NADH + H(+). The catalysed reaction is L-serine + NAD(+) + H2O = 3-hydroxypyruvate + NH4(+) + NADH + H(+). It carries out the reaction D-serine + NAD(+) + H2O = 3-hydroxypyruvate + NH4(+) + NADH + H(+). It catalyses the reaction methylamine + NAD(+) + H2O = formaldehyde + NH4(+) + NADH + H(+). The enzyme catalyses ethylamine + NAD(+) + H2O = acetaldehyde + NH4(+) + NADH + H(+). The catalysed reaction is propylamine + NAD(+) + H2O = propanal + NH4(+) + NADH + H(+). It carries out the reaction butylamine + NAD(+) + H2O = butanal + NH4(+) + NADH + H(+). It catalyses the reaction hexylamine + NAD(+) + H2O = hexanal + NH4(+) + NADH + H(+). The enzyme catalyses octylamine + NAD(+) + H2O = octanal + NH4(+) + NADH + H(+). The catalysed reaction is (R)-sec-butylamine + NAD(+) + H2O = butan-2-one + NH4(+) + NADH + H(+). It carries out the reaction (S)-sec-butylamine + NAD(+) + H2O = butan-2-one + NH4(+) + NADH + H(+). It catalyses the reaction 2-aminopentane + NAD(+) + H2O = pentan-2-one + NH4(+) + NADH + H(+). The enzyme catalyses 3-aminopentane + NAD(+) + H2O = pentan-3-one + NH4(+) + NADH + H(+). The catalysed reaction is (2R)-heptan-2-amine + NAD(+) + H2O = heptan-2-one + NH4(+) + NADH + H(+). It carries out the reaction (2S)-heptan-2-amine + NAD(+) + H2O = heptan-2-one + NH4(+) + NADH + H(+). It catalyses the reaction benzylamine + NAD(+) + H2O = benzaldehyde + NH4(+) + NADH + H(+). The enzyme catalyses 3-aminobutan-2-ol + NAD(+) + H2O = acetoin + NH4(+) + NADH + H(+). The catalysed reaction is 3-aminobutan-1-ol + NAD(+) + H2O = 4-hydroxybutan-2-one + NH4(+) + NADH + H(+). It carries out the reaction 5-hydroxypentan-2-amine + NAD(+) + H2O = 5-hydroxypentan-2-one + NH4(+) + NADH + H(+). It catalyses the reaction 4-hydroxyhexan-3-amine + NAD(+) + H2O = 4-hydroxyhexan-3-one + NH4(+) + NADH + H(+). The enzyme catalyses 5-hydroxyoctan-4-amine + NAD(+) + H2O = 5-hydroxyoctan-4-one + NH4(+) + NADH + H(+). The catalysed reaction is 2-hydroxy-1-phenylethan-1-amine + NAD(+) + H2O = 2-hydroxyacetophenone + NH4(+) + NADH + H(+). It carries out the reaction hexan-2-amine + NAD(+) + H2O = hexan-2-one + NH4(+) + NADH + H(+). It catalyses the reaction 4-phenylbutan-2-amine + NAD(+) + H2O = 4-phenylbutan-2-one + NH4(+) + NADH + H(+). In terms of biological role, catalyzes the reversible oxidative deaminations of a broad range of amines, amino alcohols and amino acids. Catalyzes the reversible dehydrogenation of serinol in the presence of NAD(+) to give dihydroxyacetone, ammonium ion and NADH, while NADP(+) shows a slight activity. Is also able to produce 2-amino-1-propanol and aspartate by the reductive amination of the corresponding keto alcohol (hydroxyacetone) and keto acid (oxaloacetate) in the presence of ammonium ions and NADH, and that of acetophenone from phenylethylamine by the oxidative deamination in the presence of NAD(+). The chain is Amine dehydrogenase from Streptomyces virginiae (Streptomyces cinnamonensis).